A 683-amino-acid polypeptide reads, in one-letter code: Cyclic nucleotide-gated channel alpha-1 (683 aa).

Topologically, residues 1–160 are cytoplasmic; sequence MKTNIINTWH…PSGNMYYNWL (160 aa). A disordered region spans residues 34–144; that stretch reads ACSSFSDNDN…PKEKKEEEKK (111 aa). A compositionally biased stretch (basic and acidic residues) spans 105–144; the sequence is SKADDKKESKKDPEKKKKKEKEKEKKKEEKPKEKKEEEKK. Residues 161–182 traverse the membrane as a helical segment; that stretch reads FCITLPVMYNWTMIIARACFDE. Residues 183-192 lie on the Extracellular side of the membrane; sequence LQSDYLEYWL. A helical transmembrane segment spans residues 193–213; sequence IFDYVSDVVYLADMFVRTRTG. Residues 214-238 lie on the Cytoplasmic side of the membrane; that stretch reads YLEQGLLVKDELKLIEKYKANLQFK. The chain crosses the membrane as a helical span at residues 239-257; it reads LDVLSVIPTDLLYFKFGWN. The Extracellular segment spans residues 258 to 262; the sequence is YPEIR. Residues 263–281 traverse the membrane as a helical segment; that stretch reads LNRLLRISRMFEFFQRTET. Residues 282 to 288 are Cytoplasmic-facing; that stretch reads RTNYPNI. The tract at residues 286–394 is ion conduction pathway; sequence PNIFRISNLV…GNIGSMISNM (109 aa). A helical membrane pass occupies residues 289–312; sequence FRISNLVMYIVIIIHWNACVYYSI. Residues 313–335 are Extracellular-facing; it reads SKAIGFGNDTWVYPDVNDPEFGR. N320 carries N-linked (GlcNAc...) asparagine glycosylation. The next 2 helical transmembrane spans lie at 336–370 and 371–395; these read LARK…VFVV and VDFL…SNMN. Residues 353-356 are selectivity filter; it reads TIGE. The interval 396 to 472 is C-linker; that stretch reads AARAEFQSRV…DTLKKVRIFA (77 aa). Over 396 to 683 the chain is Cytoplasmic; the sequence is AARAEFQSRV…ESEPTESLQG (288 aa). The cyclic nucleotide-binding domain stretch occupies residues 476 to 596; the sequence is AGLLVELVLK…EEKGRQILMK (121 aa). 3',5'-cyclic GMP-binding residues include G536, S539, R552, and T553. R552 and T553 together coordinate 3',5'-cyclic AMP. A coiled-coil region spans residues 614 to 668; that stretch reads LEEKVTRMEGSVDLLQTRFARILAEYESMQQKLKQRLTKVEKFLKPLIETEFSAL.

The protein belongs to the cyclic nucleotide-gated cation channel (TC 1.A.1.5) family. CNGA1 subfamily. As to quaternary structure, forms heterotetrameric channels composed of CNGA1 and CNGB1 subunits with 3:1 stoichiometry. May also form cyclic nucleotide-activated homotetrameric channels, that are efficiently activated by saturating cGMP, but poorly activated by saturating cAMP compared to the heterotetramer with CNGB1. The channel binds Ca(2+)-bound CALM1 via CaM1 and CaM2 regions of the CNGB1 subunit; this interaction modulates the affinity of the channel for cNMPs in response to intracellular Ca(2+) levels. As to expression, rod cells in the retina.

It localises to the cell membrane. The enzyme catalyses Ca(2+)(in) = Ca(2+)(out). The catalysed reaction is Na(+)(in) = Na(+)(out). It carries out the reaction K(+)(in) = K(+)(out). It catalyses the reaction NH4(+)(in) = NH4(+)(out). The enzyme catalyses Rb(+)(in) = Rb(+)(out). The catalysed reaction is Li(+)(in) = Li(+)(out). It carries out the reaction Cs(+)(in) = Cs(+)(out). In terms of biological role, pore-forming subunit of the rod cyclic nucleotide-gated channel. Mediates rod photoresponses at dim light converting transient changes in intracellular cGMP levels into electrical signals. In the dark, cGMP levels are high and keep the channel open enabling a steady inward current carried by Na(+) and Ca(2+) ions that leads to membrane depolarization and neurotransmitter release from synaptic terminals. Upon photon absorption cGMP levels decline leading to channel closure and membrane hyperpolarization that ultimately slows neurotransmitter release and signals the presence of light, the end point of the phototransduction cascade. Conducts cGMP- and cAMP-gated ion currents, with permeability for monovalent and divalent cations. The selectivity for Ca(2+) over Na(+) increases with cGMP concentrations, whereas the selectivity among monovalent ions is independent of the cGMP levels. The protein is Cyclic nucleotide-gated channel alpha-1 of Rattus norvegicus (Rat).